The following is a 682-amino-acid chain: UvrABC system protein B (682 aa).

One can recognise a Helicase ATP-binding domain in the interval 27-414 (DNIRAGVAHQ…SEGIVVEQII (388 aa)). Residue 40–47 (GVTGSGKT) coordinates ATP. A Beta-hairpin motif is present at residues 93–116 (YYDYYQPEAYVPTSDTYIEKDSSI). The region spanning 432 to 594 (QMEDLMTECR…IEPVSVRKSL (163 aa)) is the Helicase C-terminal domain. Residues 609–628 (AAKGRGKGRGRQAAPAQTAA) form a disordered region. The 36-residue stretch at 642-677 (GGLIQRLEREMRESARDLEFEKAAELRDRIRMLRER) folds into the UVR domain.

The protein belongs to the UvrB family. In terms of assembly, forms a heterotetramer with UvrA during the search for lesions. Interacts with UvrC in an incision complex.

The protein localises to the cytoplasm. Its function is as follows. The UvrABC repair system catalyzes the recognition and processing of DNA lesions. A damage recognition complex composed of 2 UvrA and 2 UvrB subunits scans DNA for abnormalities. Upon binding of the UvrA(2)B(2) complex to a putative damaged site, the DNA wraps around one UvrB monomer. DNA wrap is dependent on ATP binding by UvrB and probably causes local melting of the DNA helix, facilitating insertion of UvrB beta-hairpin between the DNA strands. Then UvrB probes one DNA strand for the presence of a lesion. If a lesion is found the UvrA subunits dissociate and the UvrB-DNA preincision complex is formed. This complex is subsequently bound by UvrC and the second UvrB is released. If no lesion is found, the DNA wraps around the other UvrB subunit that will check the other stand for damage. The sequence is that of UvrABC system protein B from Oleidesulfovibrio alaskensis (strain ATCC BAA-1058 / DSM 17464 / G20) (Desulfovibrio alaskensis).